Consider the following 518-residue polypeptide: Membrane-bound lytic murein transglycosylase F (518 aa).

An N-terminal signal peptide occupies residues 1 to 21 (MKKLKINYLFIGILALLLAVA). Positions 22-269 (LWPSIPWFGK…RIEEKYLGHG (248 aa)) are non-LT domain. The interval 270-518 (DDFDYVDTRT…SRKGSEEKQN (249 aa)) is LT domain. Residue Glu-314 is part of the active site.

The protein in the N-terminal section; belongs to the bacterial solute-binding protein 3 family. It in the C-terminal section; belongs to the transglycosylase Slt family.

The protein localises to the cell outer membrane. The enzyme catalyses Exolytic cleavage of the (1-&gt;4)-beta-glycosidic linkage between N-acetylmuramic acid (MurNAc) and N-acetylglucosamine (GlcNAc) residues in peptidoglycan, from either the reducing or the non-reducing ends of the peptidoglycan chains, with concomitant formation of a 1,6-anhydrobond in the MurNAc residue.. Its function is as follows. Murein-degrading enzyme that degrades murein glycan strands and insoluble, high-molecular weight murein sacculi, with the concomitant formation of a 1,6-anhydromuramoyl product. Lytic transglycosylases (LTs) play an integral role in the metabolism of the peptidoglycan (PG) sacculus. Their lytic action creates space within the PG sacculus to allow for its expansion as well as for the insertion of various structures such as secretion systems and flagella. This Escherichia coli (strain SMS-3-5 / SECEC) protein is Membrane-bound lytic murein transglycosylase F.